A 254-amino-acid polypeptide reads, in one-letter code: Ferritin-1, chloroplastic (254 aa).

A chloroplast-targeting transit peptide spans 1–47 (MASKALSSFTAKPAVSLLPHGVSSSASPSVMSLSFSRHTGGRGVVAA). An extension peptide (EP) region spans residues 48-86 (SSTVDTNNMPMTGVVFQPFEEVKKADLAIPITSNASLAR). The region spanning 87–240 (QRYADSSEAA…DFITQLRMVG (154 aa)) is the Ferritin-like diiron domain. The Fe cation site is built by Glu104, Glu139, His142, Glu188, and Gln222.

The protein belongs to the ferritin family. In terms of assembly, oligomer of 24 subunits. There are two types of subunits: L (light) chain and H (heavy) chain. The major chain can be light or heavy, depending on the species and tissue type. The functional molecule forms a roughly spherical shell with a diameter of 12 nm and contains a central cavity into which the insoluble mineral iron core is deposited.

The protein localises to the plastid. The protein resides in the chloroplast. It catalyses the reaction 4 Fe(2+) + O2 + 4 H(+) = 4 Fe(3+) + 2 H2O. Functionally, stores iron in a soluble, non-toxic, readily available form. Important for iron homeostasis. Has ferroxidase activity. Iron is taken up in the ferrous form and deposited as ferric hydroxides after oxidation. This is Ferritin-1, chloroplastic (LSC30) from Brassica napus (Rape).